We begin with the raw amino-acid sequence, 449 residues long: Transport protein ComB (449 aa).

The Cytoplasmic segment spans residues 1-20 (MKPEFLESAEFYNRRYHNFS). A helical membrane pass occupies residues 21-41 (SSVIVPMALLLVFLLGFATVA). At 42–449 (EKEMSLSTRA…YYLDQFLNKE (408 aa)) the chain is on the extracellular side.

Belongs to the membrane fusion protein (MFP) (TC 8.A.1) family.

Its subcellular location is the cell membrane. Functionally, required for induction of competence. This is Transport protein ComB (comB) from Streptococcus pneumoniae (strain ATCC BAA-255 / R6).